The following is a 500-amino-acid chain: Aldehyde dehydrogenase (500 aa).

246–251 (GSTLVG) is an NAD(+) binding site. E269 (proton acceptor) is an active-site residue. Residue C303 is the Nucleophile of the active site.

The protein belongs to the aldehyde dehydrogenase family.

The catalysed reaction is an aldehyde + NAD(+) + H2O = a carboxylate + NADH + 2 H(+). The protein operates within alcohol metabolism; ethanol degradation; acetate from ethanol: step 2/2. In Agaricus bisporus (White button mushroom), this protein is Aldehyde dehydrogenase (aldA).